A 155-amino-acid polypeptide reads, in one-letter code: Ribosomal RNA large subunit methyltransferase H (155 aa).

S-adenosyl-L-methionine is bound by residues Leu-72, Gly-103, and 122–127; that span reads LSALTL.

This sequence belongs to the RNA methyltransferase RlmH family. Homodimer.

Its subcellular location is the cytoplasm. It carries out the reaction pseudouridine(1915) in 23S rRNA + S-adenosyl-L-methionine = N(3)-methylpseudouridine(1915) in 23S rRNA + S-adenosyl-L-homocysteine + H(+). Functionally, specifically methylates the pseudouridine at position 1915 (m3Psi1915) in 23S rRNA. This chain is Ribosomal RNA large subunit methyltransferase H, found in Shigella boydii serotype 18 (strain CDC 3083-94 / BS512).